Reading from the N-terminus, the 99-residue chain is UPF0235 protein Neut_2146 (99 aa).

Belongs to the UPF0235 family.

The sequence is that of UPF0235 protein Neut_2146 from Nitrosomonas eutropha (strain DSM 101675 / C91 / Nm57).